Here is a 297-residue protein sequence, read N- to C-terminus: ABSCISIC ACID-INSENSITIVE 5-like protein 2 (297 aa).

S21, S43, and S81 each carry phosphoserine. 2 disordered regions span residues 100–119 (IQQN…QPTL) and 138–157 (IPGS…SGAG). T118 bears the Phosphothreonine mark. The span at 146-157 (PVGGGSAGSGAG) shows a compositional bias: gly residues. The bZIP domain maps to 225 to 288 (VERRQKRMIK…SVPPPDPKRQ (64 aa)). The segment at 227–246 (RRQKRMIKNRESAARSRARK) is basic motif. Positions 253–267 (LEIKVSRLEEENERL) are leucine-zipper. The tract at residues 272 to 297 (EVEKILPSVPPPDPKRQLRRTSSAPF) is disordered.

Belongs to the bZIP family. ABI5 subfamily. DNA-binding heterodimer with ABI5/DPBF1, DPBF2 or EEL/DPBF4. Interacts with the AFP proteins AFP1, AFP2, AFP3 and AFP4. In terms of tissue distribution, predominantly expressed in seeds.

It is found in the nucleus. In terms of biological role, binds to the embryo specification element and the ABA-responsive element (ABRE) of the Dc3 gene promoter. Could participate in abscisic acid-regulated gene expression during seed development. The sequence is that of ABSCISIC ACID-INSENSITIVE 5-like protein 2 (DPBF3) from Arabidopsis thaliana (Mouse-ear cress).